The following is a 78-amino-acid chain: Small ribosomal subunit protein bS20 (78 aa).

This sequence belongs to the bacterial ribosomal protein bS20 family.

Its function is as follows. Binds directly to 16S ribosomal RNA. This chain is Small ribosomal subunit protein bS20, found in Streptococcus sanguinis (strain SK36).